The primary structure comprises 609 residues: Dihydroxy-acid dehydratase (609 aa).

Residue Asp-81 participates in Mg(2+) binding. Cys-122 is a binding site for [2Fe-2S] cluster. Mg(2+) is bound by residues Asp-123 and Lys-124. Lys-124 is modified (N6-carboxylysine). Cys-195 is a binding site for [2Fe-2S] cluster. Glu-491 serves as a coordination point for Mg(2+). Ser-517 serves as the catalytic Proton acceptor.

It belongs to the IlvD/Edd family. In terms of assembly, homodimer. [2Fe-2S] cluster serves as cofactor. The cofactor is Mg(2+).

It catalyses the reaction (2R)-2,3-dihydroxy-3-methylbutanoate = 3-methyl-2-oxobutanoate + H2O. It carries out the reaction (2R,3R)-2,3-dihydroxy-3-methylpentanoate = (S)-3-methyl-2-oxopentanoate + H2O. It functions in the pathway amino-acid biosynthesis; L-isoleucine biosynthesis; L-isoleucine from 2-oxobutanoate: step 3/4. Its pathway is amino-acid biosynthesis; L-valine biosynthesis; L-valine from pyruvate: step 3/4. Functionally, functions in the biosynthesis of branched-chain amino acids. Catalyzes the dehydration of (2R,3R)-2,3-dihydroxy-3-methylpentanoate (2,3-dihydroxy-3-methylvalerate) into 2-oxo-3-methylpentanoate (2-oxo-3-methylvalerate) and of (2R)-2,3-dihydroxy-3-methylbutanoate (2,3-dihydroxyisovalerate) into 2-oxo-3-methylbutanoate (2-oxoisovalerate), the penultimate precursor to L-isoleucine and L-valine, respectively. The polypeptide is Dihydroxy-acid dehydratase (Acinetobacter baumannii (strain AB307-0294)).